The sequence spans 93 residues: UPF0358 protein OB1428 (93 aa).

The protein belongs to the UPF0358 family.

The sequence is that of UPF0358 protein OB1428 from Oceanobacillus iheyensis (strain DSM 14371 / CIP 107618 / JCM 11309 / KCTC 3954 / HTE831).